We begin with the raw amino-acid sequence, 74 residues long: Lambda-hexatoxin-Hv1e (74 aa).

Residues 1–22 form the signal peptide; sequence MNTATCFIVLLVVATVIGGIEA. A propeptide spanning residues 23-35 is cleaved from the precursor; sequence GEFDMRKDVMGLF. Cystine bridges form between Cys40/Cys54, Cys47/Cys59, Cys50/Cys51, and Cys53/Cys69.

It belongs to the neurotoxin 11 (kappa toxin) family. As to expression, expressed by the venom gland.

Its subcellular location is the secreted. Its function is as follows. This excitatory toxin inhibits insect calcium-activated potassium (KCa) channels (Slo-type). This is Lambda-hexatoxin-Hv1e from Hadronyche versuta (Blue mountains funnel-web spider).